The following is a 236-amino-acid chain: Exosome complex component Rrp4 (236 aa).

The S1 motif domain occupies 64–133; it reads GDKVIGKIIE…EIKESWLTLK (70 aa). Residues 141–199 form the KH domain; the sequence is EGGHMVLIHASRVPRVIGKGGGMVNMVKELTSTRIIIGQNGLIWIDGPIEGVTMAIAAI.

It belongs to the RRP4 family. Component of the archaeal exosome complex. Forms a trimer of Rrp4 and/or Csl4 subunits. The trimer associates with a hexameric ring-like arrangement composed of 3 Rrp41-Rrp42 heterodimers.

It is found in the cytoplasm. Its function is as follows. Non-catalytic component of the exosome, which is a complex involved in RNA degradation. Increases the RNA binding and the efficiency of RNA degradation. Confers strong poly(A) specificity to the exosome. The protein is Exosome complex component Rrp4 of Thermoplasma volcanium (strain ATCC 51530 / DSM 4299 / JCM 9571 / NBRC 15438 / GSS1).